Reading from the N-terminus, the 232-residue chain is tRNA1(Val) (adenine(37)-N6)-methyltransferase (232 aa).

The protein belongs to the methyltransferase superfamily. tRNA (adenine-N(6)-)-methyltransferase family.

It is found in the cytoplasm. The catalysed reaction is adenosine(37) in tRNA1(Val) + S-adenosyl-L-methionine = N(6)-methyladenosine(37) in tRNA1(Val) + S-adenosyl-L-homocysteine + H(+). Specifically methylates the adenine in position 37 of tRNA(1)(Val) (anticodon cmo5UAC). This is tRNA1(Val) (adenine(37)-N6)-methyltransferase from Haemophilus influenzae (strain PittGG).